The following is a 329-amino-acid chain: E3 ubiquitin-protein ligase SINA-like 4 (329 aa).

Basic and acidic residues predominate over residues 1–12 (MTKLGRRNDGGG). Residues 1 to 58 (MTKLGRRNDGGGKSHRSSTKRQRRTSVSVDDPSPGEEEEKTLVVLTDDSDSEEDDKPL) form a disordered region. Basic residues predominate over residues 13–24 (KSHRSSTKRQRR). The RING-type; degenerate zinc finger occupies 86–122 (CPNCFDPLKKPIFQCNNGHLACFLCCIKLKKRCSFCK). The tract at residues 136 to 325 (VIKAGLVSCS…MEISIGDKND (190 aa)) is SBD. The SIAH-type zinc finger occupies 139–198 (AGLVSCSNAIYGCKQSTTYGNQLQSHEKVCVFAPCSCPIKDCNYIGFYKDLINHFRATHK). The Zn(2+) site is built by Cys-144, Cys-151, His-164, Cys-168, Cys-175, Cys-180, His-192, and His-197.

It belongs to the SINA (Seven in absentia) family.

It catalyses the reaction S-ubiquitinyl-[E2 ubiquitin-conjugating enzyme]-L-cysteine + [acceptor protein]-L-lysine = [E2 ubiquitin-conjugating enzyme]-L-cysteine + N(6)-ubiquitinyl-[acceptor protein]-L-lysine.. It functions in the pathway protein modification; protein ubiquitination. E3 ubiquitin-protein ligase that mediates ubiquitination and subsequent proteasomal degradation of target proteins. E3 ubiquitin ligases accept ubiquitin from an E2 ubiquitin-conjugating enzyme in the form of a thioester and then directly transfers the ubiquitin to targeted substrates. It probably triggers the ubiquitin-mediated degradation of different substrates. This Arabidopsis thaliana (Mouse-ear cress) protein is E3 ubiquitin-protein ligase SINA-like 4.